The following is a 141-amino-acid chain: uncharacterized protein (141 aa).

Positions 13 to 141 constitute a Ferritin-like diiron domain; sequence VTKGTELEKE…LKGILDRYFK (129 aa). Glu-63, His-66, Glu-125, and His-128 together coordinate Fe cation.

This is an uncharacterized protein from Methanocaldococcus jannaschii (strain ATCC 43067 / DSM 2661 / JAL-1 / JCM 10045 / NBRC 100440) (Methanococcus jannaschii).